The chain runs to 179 residues: Large ribosomal subunit protein uL5 (179 aa).

This sequence belongs to the universal ribosomal protein uL5 family. In terms of assembly, part of the 50S ribosomal subunit; part of the 5S rRNA/L5/L18/L25 subcomplex. Contacts the 5S rRNA and the P site tRNA. Forms a bridge to the 30S subunit in the 70S ribosome.

In terms of biological role, this is one of the proteins that bind and probably mediate the attachment of the 5S RNA into the large ribosomal subunit, where it forms part of the central protuberance. In the 70S ribosome it contacts protein S13 of the 30S subunit (bridge B1b), connecting the 2 subunits; this bridge is implicated in subunit movement. Contacts the P site tRNA; the 5S rRNA and some of its associated proteins might help stabilize positioning of ribosome-bound tRNAs. This Nitratidesulfovibrio vulgaris (strain DSM 19637 / Miyazaki F) (Desulfovibrio vulgaris) protein is Large ribosomal subunit protein uL5.